A 1416-amino-acid polypeptide reads, in one-letter code: DNA-directed RNA polymerase subunit beta' (1416 aa).

Zn(2+)-binding residues include C68, C70, C83, and C86. Mg(2+)-binding residues include D458, D460, and D462. Residues C811, C884, C891, and C894 each coordinate Zn(2+).

It belongs to the RNA polymerase beta' chain family. As to quaternary structure, the RNAP catalytic core consists of 2 alpha, 1 beta, 1 beta' and 1 omega subunit. When a sigma factor is associated with the core the holoenzyme is formed, which can initiate transcription. The cofactor is Mg(2+). Zn(2+) is required as a cofactor.

It carries out the reaction RNA(n) + a ribonucleoside 5'-triphosphate = RNA(n+1) + diphosphate. In terms of biological role, DNA-dependent RNA polymerase catalyzes the transcription of DNA into RNA using the four ribonucleoside triphosphates as substrates. The sequence is that of DNA-directed RNA polymerase subunit beta' from Francisella philomiragia subsp. philomiragia (strain ATCC 25017 / CCUG 19701 / FSC 153 / O#319-036).